A 122-amino-acid polypeptide reads, in one-letter code: MYVQEHRLWGLMDKPHSAPCLMSLSLSFLICNKGRNAIRVQQSTDERMDAMLLWQCPTQGTRKNHESNSSLHHVPNWIFHSTIIPPNKGSKRCLRKVDWLLPRAGGVGGKRGVTADGDRVSF.

Belongs to the FAM223 family.

In Homo sapiens (Human), this protein is Protein FAM223A (FAM223A).